The primary structure comprises 215 residues: Large ribosomal subunit protein uL16 (215 aa).

Belongs to the universal ribosomal protein uL16 family. In terms of assembly, component of the large ribosomal subunit.

The protein localises to the cytoplasm. Its function is as follows. Component of the large ribosomal subunit. Plays a role in the formation of actively translating ribosomes. Plays a role in the embryonic brain development. This is Large ribosomal subunit protein uL16 from Danio rerio (Zebrafish).